Here is an 861-residue protein sequence, read N- to C-terminus: Leucine--tRNA ligase (861 aa).

The 'HIGH' region motif lies at 43–53 (PYPSGKLHMGH). A 'KMSKS' region motif is present at residues 588 to 592 (KMSKS). K591 provides a ligand contact to ATP.

This sequence belongs to the class-I aminoacyl-tRNA synthetase family.

The protein resides in the cytoplasm. It catalyses the reaction tRNA(Leu) + L-leucine + ATP = L-leucyl-tRNA(Leu) + AMP + diphosphate. The sequence is that of Leucine--tRNA ligase from Symbiobacterium thermophilum (strain DSM 24528 / JCM 14929 / IAM 14863 / T).